We begin with the raw amino-acid sequence, 458 residues long: Argininosuccinate lyase (458 aa).

The protein belongs to the lyase 1 family. Argininosuccinate lyase subfamily.

The protein resides in the cytoplasm. It catalyses the reaction 2-(N(omega)-L-arginino)succinate = fumarate + L-arginine. The protein operates within amino-acid biosynthesis; L-arginine biosynthesis; L-arginine from L-ornithine and carbamoyl phosphate: step 3/3. This is Argininosuccinate lyase from Actinobacillus pleuropneumoniae serotype 7 (strain AP76).